We begin with the raw amino-acid sequence, 375 residues long: DNA replication and repair protein RecF (375 aa).

30–37 contacts ATP; it reads GENAQGKT.

The protein belongs to the RecF family.

Its subcellular location is the cytoplasm. The RecF protein is involved in DNA metabolism; it is required for DNA replication and normal SOS inducibility. RecF binds preferentially to single-stranded, linear DNA. It also seems to bind ATP. The polypeptide is DNA replication and repair protein RecF (Bacillus cereus (strain G9842)).